Consider the following 86-residue polypeptide: YcgL domain-containing protein XAC4085 (86 aa).

One can recognise a YcgL domain in the interval 1-83 (MHAYVYKSQR…PKTIVLAGEC (83 aa)).

The sequence is that of YcgL domain-containing protein XAC4085 from Xanthomonas axonopodis pv. citri (strain 306).